Consider the following 468-residue polypeptide: Adenylyltransferase and sulfurtransferase MOCS3-1 (468 aa).

ATP contacts are provided by residues glycine 111, aspartate 132, 139-143 (NNLHR), lysine 156, and 200-201 (DN). Zn(2+) contacts are provided by cysteine 241 and cysteine 244. Cysteine 258 (glycyl thioester intermediate; for adenylyltransferase activity) is an active-site residue. Cysteine 316 and cysteine 319 together coordinate Zn(2+). Residues 371–466 (DGEPHLLLDV…WGRDVDPDFP (96 aa)) form the Rhodanese domain. The active-site Cysteine persulfide intermediate; for sulfurtransferase activity is the cysteine 426.

In the N-terminal section; belongs to the HesA/MoeB/ThiF family. UBA4 subfamily. Requires Zn(2+) as cofactor.

Its subcellular location is the cytoplasm. The catalysed reaction is [molybdopterin-synthase sulfur-carrier protein]-C-terminal Gly-Gly + ATP + H(+) = [molybdopterin-synthase sulfur-carrier protein]-C-terminal Gly-Gly-AMP + diphosphate. It catalyses the reaction [molybdopterin-synthase sulfur-carrier protein]-C-terminal Gly-Gly-AMP + S-sulfanyl-L-cysteinyl-[cysteine desulfurase] + AH2 = [molybdopterin-synthase sulfur-carrier protein]-C-terminal-Gly-aminoethanethioate + L-cysteinyl-[cysteine desulfurase] + A + AMP + 2 H(+). It participates in tRNA modification; 5-methoxycarbonylmethyl-2-thiouridine-tRNA biosynthesis. The protein operates within cofactor biosynthesis; molybdopterin biosynthesis. In terms of biological role, plays a central role in 2-thiolation of mcm(5)S(2)U at tRNA wobble positions of cytosolic tRNA(Lys), tRNA(Glu) and tRNA(Gln). Also essential during biosynthesis of the molybdenum cofactor. Acts by mediating the C-terminal thiocarboxylation of sulfur carriers URM1 and MOCS2A. Its N-terminus first activates URM1 and MOCS2A as acyl-adenylates (-COAMP), then the persulfide sulfur on the catalytic cysteine is transferred to URM1 and MOCS2A to form thiocarboxylation (-COSH) of their C-terminus. The reaction probably involves hydrogen sulfide that is generated from the persulfide intermediate and that acts as a nucleophile towards URM1 and MOCS2A. Subsequently, a transient disulfide bond is formed. Does not use thiosulfate as sulfur donor; NFS1 probably acting as a sulfur donor for thiocarboxylation reactions. This is Adenylyltransferase and sulfurtransferase MOCS3-1 from Zea mays (Maize).